A 447-amino-acid chain; its full sequence is Na(+)-translocating NADH-quinone reductase subunit A (447 aa).

It belongs to the NqrA family. As to quaternary structure, composed of six subunits; NqrA, NqrB, NqrC, NqrD, NqrE and NqrF.

The catalysed reaction is a ubiquinone + n Na(+)(in) + NADH + H(+) = a ubiquinol + n Na(+)(out) + NAD(+). Its function is as follows. NQR complex catalyzes the reduction of ubiquinone-1 to ubiquinol by two successive reactions, coupled with the transport of Na(+) ions from the cytoplasm to the periplasm. NqrA to NqrE are probably involved in the second step, the conversion of ubisemiquinone to ubiquinol. In Klebsiella pneumoniae subsp. pneumoniae (strain ATCC 700721 / MGH 78578), this protein is Na(+)-translocating NADH-quinone reductase subunit A.